A 778-amino-acid polypeptide reads, in one-letter code: DISP complex protein LRCH3 (778 aa).

LRR repeat units follow at residues 56-79 (AAVT…AANH), 81-104 (LTDT…ACHF), 105-127 (VSLE…VLNL), 128-150 (QALT…LCNL), 152-172 (LKVL…IGHL), 173-195 (RHLT…IGNL), 197-218 (ALRD…LAEV), 220-239 (LIRL…CYRN), 240-264 (LRHL…CIKG), and 266-290 (IHIF…ERRP). Positions 56–290 (AAVTGVLSLS…PDLPDYERRP (235 aa)) are mediates interaction with DOCK7. Phosphoserine is present on residues Ser-324, Ser-415, and Ser-419. The segment at 382–642 (TTEEEENDVK…PATDPTDAIT (261 aa)) is mediates direct interaction with MYO6. The interval 511–536 (QKASHNPQRQQPPGNGECSFPSRRSQ) is disordered. Over residues 514 to 523 (SHNPQRQQPP) the composition is skewed to polar residues. Ser-608 and Ser-625 each carry phosphoserine. Positions 645–758 (REEELKLIDQ…VTVQALLELA (114 aa)) constitute a Calponin-homology (CH) domain. A disordered region spans residues 758–778 (APPKQPPPQQPQQQQPQLSAV). Residues 768 to 778 (PQQQQPQLSAV) show a composition bias toward low complexity.

As to quaternary structure, component of the DOCK7-induced septin displacement/DISP complex, at least composed of DOCK7, LRCH3 and MYO6.

It localises to the cytoplasm. As part of the DISP complex, may regulate the association of septins with actin and thereby regulate the actin cytoskeleton. The polypeptide is DISP complex protein LRCH3 (Mus musculus (Mouse)).